Reading from the N-terminus, the 289-residue chain is Dermonecrotic toxin LarSicTox-betaID1 (289 aa).

Residues 1-2 form the signal peptide; it reads EG. Positions 3 to 11 are excised as a propeptide; it reads AEQDGSERT. Residue His-22 is part of the active site. The Mg(2+) site is built by Glu-42 and Asp-44. The active-site Nucleophile is the His-58. 2 cysteine pairs are disulfide-bonded: Cys-62/Cys-68 and Cys-64/Cys-207. Asp-102 is a binding site for Mg(2+).

It belongs to the arthropod phospholipase D family. Class II subfamily. The cofactor is Mg(2+). As to expression, expressed by the venom gland.

It localises to the secreted. It catalyses the reaction an N-(acyl)-sphingosylphosphocholine = an N-(acyl)-sphingosyl-1,3-cyclic phosphate + choline. The enzyme catalyses N-hexanoyl-sphing-4-enine-1-phosphocholine = N-(hexanoyl)-sphing-4-enine-1,3-cyclic phosphate + choline. The catalysed reaction is N-(dodecanoyl)-sphing-4-enine-1-phosphocholine = N-dodecanoyl-sphing-4-enine-1,3-cyclic phosphate + choline. It carries out the reaction an N-(acyl)-sphingosylphosphoethanolamine = an N-(acyl)-sphingosyl-1,3-cyclic phosphate + ethanolamine. It catalyses the reaction N-dodecanoyl-heptadecasphing-4-enine-1-phosphoethanolamine = N-dodecanoyl-heptadecasphing-4-enine-1,3-cyclic phosphate + ethanolamine. The enzyme catalyses a 1-acyl-sn-glycero-3-phosphocholine = a 1-acyl-sn-glycero-2,3-cyclic phosphate + choline. The catalysed reaction is 1-tetradecanoyl-sn-glycero-3-phosphocholine = 1-tetradecanoyl-sn-glycero-2,3-cyclic phosphate + choline. It carries out the reaction 1-octanoyl-sn-glycero-3-phosphocholine = 1-octanoyl-sn-glycero-2,3-cyclic phosphate + choline. It catalyses the reaction a 1-acyl-sn-glycero-3-phosphoethanolamine = a 1-acyl-sn-glycero-2,3-cyclic phosphate + ethanolamine. The enzyme catalyses 1-tetradecanoyl-sn-glycero-3-phosphoethanolamine = 1-tetradecanoyl-sn-glycero-2,3-cyclic phosphate + ethanolamine. Dermonecrotic toxins cleave the phosphodiester linkage between the phosphate and headgroup of certain phospholipids (sphingolipid and lysolipid substrates), forming an alcohol (often choline) and a cyclic phosphate. This toxin acts on sphingomyelin (SM) and on ceramide phosphoethanolamine (CPE) with high activity. It also acts on lysophosphatidylcholine (LPC) and on lysophosphatidylethanolamine (LPE) with moderate activity. It is not active on lysophosphatidylserine (LPS), and lysophosphatidylglycerol (LPG). It acts by transphosphatidylation, releasing exclusively cyclic phosphate as second products. It is not surprising that spider toxins have affinity for ethanolamine-containing sphingolipids since they are common in insect prey. On mammals, induces dermonecrosis, hemolysis, increased vascular permeability, edema, inflammatory response, and platelet aggregation. The polypeptide is Dermonecrotic toxin LarSicTox-betaID1 (Loxosceles arizonica (Arizona brown spider)).